A 69-amino-acid polypeptide reads, in one-letter code: Toxin Lc a (69 aa).

Intrachain disulfides connect C3-C20, C13-C41, C45-C56, and C57-C62.

Belongs to the three-finger toxin family. Long-chain subfamily. Type II alpha-neurotoxin sub-subfamily. Expressed by the venom gland.

Its subcellular location is the secreted. Functionally, binds with high affinity to muscular nicotinic acetylcholine receptors (nAChRs), whereas it binds with a low affinity to neuronal alpha-7/CHRNA7 nAChRs. The protein is Toxin Lc a of Laticauda colubrina (Yellow-lipped sea krait).